The chain runs to 311 residues: MKVAVIGAAGGIGQALALLLKNRLPAGSDLALYDIAPVTPGVAADLSHIPTPVSIKGYAGEDPTPALEGADVVLISAGVARKPGMDRADLFNVNAGIVKSLAEKIAVTCPTACVGIITNPVNTTVPIAAEVLKKAGVYDKRRLFGITTLDVIRSETFVAELKDKDPGDIRVPVIGGHSGVTILPLLSQVEGVEFTDEEIAALTTRIQNAGTEVVEAKAGGGSATLSMGQAACRFGLALVKALQGEENVIECAYVEGEGEHAPFFAQPVKLGKEGAEAILSYGELSDFERNALDSMLETLNGDIEIGVEFAK.

NAD(+)-binding positions include 7 to 13 (GAAGGIG) and aspartate 34. Substrate-binding residues include arginine 81 and arginine 87. Residues asparagine 94 and 117–119 (ITN) each bind NAD(+). Substrate contacts are provided by asparagine 119 and arginine 153. Histidine 177 (proton acceptor) is an active-site residue. Methionine 227 lines the NAD(+) pocket.

It belongs to the LDH/MDH superfamily. MDH type 1 family. Homodimer.

It carries out the reaction (S)-malate + NAD(+) = oxaloacetate + NADH + H(+). Functionally, catalyzes the reversible oxidation of malate to oxaloacetate. This chain is Malate dehydrogenase, found in Vibrio atlanticus (strain LGP32) (Vibrio splendidus (strain Mel32)).